The following is a 132-amino-acid chain: Acetylcholinesterase (132 aa).

An N-linked (GlcNAc...) asparagine glycan is attached at Asn-37. The cysteines at positions 45 and 72 are disulfide-linked.

The protein belongs to the type-B carboxylesterase/lipase family.

It localises to the synapse. The protein localises to the secreted. The protein resides in the cell membrane. It catalyses the reaction acetylcholine + H2O = choline + acetate + H(+). Rapidly hydrolyzes choline released into the synapse. This Culex pipiens pipiens (Northern house mosquito) protein is Acetylcholinesterase (ACE-1).